We begin with the raw amino-acid sequence, 876 residues long: Valine--tRNA ligase (876 aa).

A 'HIGH' region motif is present at residues 44–54; the sequence is PNVTGKLHLGH. Positions 520–524 match the 'KMSKS' region motif; the sequence is KMSKS. Lysine 523 serves as a coordination point for ATP. Residues 805 to 876 adopt a coiled-coil conformation; the sequence is LEGLIDMDKE…VKARIEQLKA (72 aa).

The protein belongs to the class-I aminoacyl-tRNA synthetase family. ValS type 1 subfamily. In terms of assembly, monomer.

It is found in the cytoplasm. It carries out the reaction tRNA(Val) + L-valine + ATP = L-valyl-tRNA(Val) + AMP + diphosphate. Catalyzes the attachment of valine to tRNA(Val). As ValRS can inadvertently accommodate and process structurally similar amino acids such as threonine, to avoid such errors, it has a 'posttransfer' editing activity that hydrolyzes mischarged Thr-tRNA(Val) in a tRNA-dependent manner. The chain is Valine--tRNA ligase from Staphylococcus carnosus (strain TM300).